Here is a 67-residue protein sequence, read N- to C-terminus: Phycobilisome 7.8 kDa linker polypeptide, allophycocyanin-associated, core (67 aa).

The region spanning 1–56 (MRMFRITACLPSPSKIRTQRELQNTFFTKLVPYDAWFREQQRIQKLGGKIIKVELA) is the CpcD-like domain.

This sequence belongs to the phycobilisome linker protein family.

Its subcellular location is the cellular thylakoid membrane. Functionally, rod linker protein, associated with allophycocyanin. Linker polypeptides determine the state of aggregation and the location of the disk-shaped phycobiliprotein units within the phycobilisome and modulate their spectroscopic properties in order to mediate a directed and optimal energy transfer. The sequence is that of Phycobilisome 7.8 kDa linker polypeptide, allophycocyanin-associated, core (apcC) from Synechococcus sp. (strain ATCC 27144 / PCC 6301 / SAUG 1402/1) (Anacystis nidulans).